The primary structure comprises 190 residues: MLEQLYDSLVNAPVVKRGDYSYFIHPVSDGVPLLEPSLLEEISECILCYADMDVDRIVTVEAMGIPVATCLSLKTGIPLSIVRKRKYDLAGEIELSQSTGYSKGKLYVNGISEGDRVLIVDDVISTGGTLLVLVKALEDAGIKISDVVAVIERGTGSNDLRDAGIDVKTLVRVEVDDDRVVVEEVYSDNE.

Belongs to the purine/pyrimidine phosphoribosyltransferase family. Archaeal HPRT subfamily. As to quaternary structure, homodimer.

It localises to the cytoplasm. It catalyses the reaction IMP + diphosphate = hypoxanthine + 5-phospho-alpha-D-ribose 1-diphosphate. The catalysed reaction is GMP + diphosphate = guanine + 5-phospho-alpha-D-ribose 1-diphosphate. The protein operates within purine metabolism; IMP biosynthesis via salvage pathway; IMP from hypoxanthine: step 1/1. Catalyzes a salvage reaction resulting in the formation of IMP that is energically less costly than de novo synthesis. This Methanosalsum zhilinae (strain DSM 4017 / NBRC 107636 / OCM 62 / WeN5) (Methanohalophilus zhilinae) protein is Hypoxanthine/guanine phosphoribosyltransferase.